A 515-amino-acid polypeptide reads, in one-letter code: Lysine--tRNA ligase (515 aa).

Mg(2+) is bound by residues Glu-422 and Glu-429.

This sequence belongs to the class-II aminoacyl-tRNA synthetase family. Homodimer. The cofactor is Mg(2+).

It is found in the cytoplasm. It catalyses the reaction tRNA(Lys) + L-lysine + ATP = L-lysyl-tRNA(Lys) + AMP + diphosphate. The protein is Lysine--tRNA ligase of Clostridium acetobutylicum (strain ATCC 824 / DSM 792 / JCM 1419 / IAM 19013 / LMG 5710 / NBRC 13948 / NRRL B-527 / VKM B-1787 / 2291 / W).